A 38-amino-acid polypeptide reads, in one-letter code: Small ribosomal subunit protein eS32 (38 aa).

It belongs to the eukaryotic ribosomal protein eS32 family. Component of the small ribosomal subunit (SSU).

The chain is Small ribosomal subunit protein eS32 (rpl41e) from Methanocaldococcus jannaschii (strain ATCC 43067 / DSM 2661 / JAL-1 / JCM 10045 / NBRC 100440) (Methanococcus jannaschii).